Reading from the N-terminus, the 86-residue chain is Elicitor peptide 5 (86 aa).

The propeptide occupies 1–59 (MQQERDHKRDCCKLMPQTVKAFFKCLRFRRSSSSSSDMVKARARNEEKEEPSSIETSTR). The disordered stretch occupies residues 31-86 (SSSSSSDMVKARARNEEKEEPSSIETSTRSLNVMRKGIRKQPVSSGKRGGVNDYDM). Over residues 39–51 (VKARARNEEKEEP) the composition is skewed to basic and acidic residues.

It belongs to the brassicaceae elicitor peptide family.

Elicitor of plant defense. In Arabidopsis thaliana (Mouse-ear cress), this protein is Elicitor peptide 5 (PEP5).